Here is a 490-residue protein sequence, read N- to C-terminus: Probable glycine dehydrogenase (decarboxylating) subunit 2 (490 aa).

Residue K273 is modified to N6-(pyridoxal phosphate)lysine.

This sequence belongs to the GcvP family. C-terminal subunit subfamily. The glycine cleavage system is composed of four proteins: P, T, L and H. In this organism, the P 'protein' is a heterodimer of two subunits. Requires pyridoxal 5'-phosphate as cofactor.

It catalyses the reaction N(6)-[(R)-lipoyl]-L-lysyl-[glycine-cleavage complex H protein] + glycine + H(+) = N(6)-[(R)-S(8)-aminomethyldihydrolipoyl]-L-lysyl-[glycine-cleavage complex H protein] + CO2. Its function is as follows. The glycine cleavage system catalyzes the degradation of glycine. The P protein binds the alpha-amino group of glycine through its pyridoxal phosphate cofactor; CO(2) is released and the remaining methylamine moiety is then transferred to the lipoamide cofactor of the H protein. The chain is Probable glycine dehydrogenase (decarboxylating) subunit 2 from Staphylococcus aureus (strain MSSA476).